The chain runs to 273 residues: Putative ankyrin repeat protein RBE_0317 (273 aa).

5 ANK repeats span residues 31–60, 93–123, 127–157, 161–191, and 195–225; these read LGKEIFPIATFFDKNDIIRTLMEEKIDFYS, NGNTLLHAAIDQGKSEVVKFLTSYKNLEVNT, GGNSPLHLAIKSNNPEIVEMLLSYENINVNE, YGDTTLHKAIRSYNHKIIEMLLLREEIDVNE, and QGETPLHGAVKSNRPEIVKMLLSHKNMDTKQ.

This Rickettsia bellii (strain RML369-C) protein is Putative ankyrin repeat protein RBE_0317.